The chain runs to 287 residues: Zinc transporter ZIP9 (287 aa).

Residues 4 to 24 (FLSISLLSLAMLVGCYVAGII) traverse the membrane as a helical segment. N-linked (GlcNAc...) asparagine glycosylation is present at N29. Transmembrane regions (helical) follow at residues 35-55 (LKLVTVLGAGLLCGTALAVIV), 107-127 (AYIGVSLVLGFVFMLLVDQIG), 147-167 (ITTTLGLVVHAAADGVALGAA), 177-197 (LIVFVAIMLHKAPAAFGLVSF), and 211-231 (HLLVFALAAPAMSMLTYLGLS). Residue N242 is glycosylated (N-linked (GlcNAc...) asparagine). A helical membrane pass occupies residues 245–265 (GVAMLFSAGTFLYVATVHVLP). The segment at 268–287 (TSTNQSGSSLSPRPLPSGKN) is disordered. An N-linked (GlcNAc...) asparagine glycan is attached at N271. Residues 273-287 (SGSSLSPRPLPSGKN) are compositionally biased toward low complexity.

Belongs to the ZIP transporter (TC 2.A.5) family.

The protein resides in the golgi apparatus. It is found in the trans-Golgi network membrane. The protein localises to the cell membrane. Its subcellular location is the cytoplasm. It localises to the perinuclear region. The protein resides in the mitochondrion. It is found in the nucleus. The enzyme catalyses Zn(2+)(in) = Zn(2+)(out). Its function is as follows. Transports zinc ions across cell and organelle membranes into the cytoplasm and regulates intracellular zinc homeostasis. Participates in the zinc ions efflux out of the secretory compartments. Regulates intracellular zinc level, resulting in the enhancement of AKT1 and MAPK3/MAPK1 (Erk1/2) phosphorylation in response to the BCR activation. Also functions as a membrane androgen receptor that mediates, through a G protein, the non-classical androgen signaling pathway, characterized by the activation of MAPK3/MAPK1 (Erk1/2) and transcription factors CREB1 or ATF1. This pathway contributes to CLDN1 and CLDN5 expression and tight junction formation between adjacent Sertoli cells. Mediates androgen-induced vascular endothelial cell proliferation through activation of an inhibitory G protein leading to the AKT1 and MAPK3/MAPK1 (Erk1/2) activation which in turn modulate inhibition (phosphorylation) of GSK3B and CCND1 transcription. Moreover, has dual functions as a membrane-bound androgen receptor and as an androgen-dependent zinc transporter both of which are mediated through an inhibitory G protein (Gi) that mediates both MAP kinase and zinc signaling leading to the androgen-dependent apoptotic process. The chain is Zinc transporter ZIP9 from Rattus norvegicus (Rat).